Here is a 187-residue protein sequence, read N- to C-terminus: ATP synthase subunit delta, chloroplastic (187 aa).

The protein belongs to the ATPase delta chain family. In terms of assembly, F-type ATPases have 2 components, F(1) - the catalytic core - and F(0) - the membrane proton channel. F(1) has five subunits: alpha(3), beta(3), gamma(1), delta(1), epsilon(1). CF(0) has four main subunits: a(1), b(1), b'(1) and c(10-14). The alpha and beta chains form an alternating ring which encloses part of the gamma chain. F(1) is attached to F(0) by a central stalk formed by the gamma and epsilon chains, while a peripheral stalk is formed by the delta, b and b' chains.

It is found in the plastid. It localises to the chloroplast thylakoid membrane. In terms of biological role, f(1)F(0) ATP synthase produces ATP from ADP in the presence of a proton or sodium gradient. F-type ATPases consist of two structural domains, F(1) containing the extramembraneous catalytic core and F(0) containing the membrane proton channel, linked together by a central stalk and a peripheral stalk. During catalysis, ATP synthesis in the catalytic domain of F(1) is coupled via a rotary mechanism of the central stalk subunits to proton translocation. This protein is part of the stalk that links CF(0) to CF(1). It either transmits conformational changes from CF(0) to CF(1) or is implicated in proton conduction. The sequence is that of ATP synthase subunit delta, chloroplastic from Thalassiosira pseudonana (Marine diatom).